We begin with the raw amino-acid sequence, 322 residues long: Acetyl-coenzyme A carboxylase carboxyl transferase subunit alpha (322 aa).

The 264-residue stretch at 30 to 293 (ALDISAEITR…RQALQESLRK (264 aa)) folds into the CoA carboxyltransferase C-terminal domain.

This sequence belongs to the AccA family. In terms of assembly, acetyl-CoA carboxylase is a heterohexamer composed of biotin carboxyl carrier protein (AccB), biotin carboxylase (AccC) and two subunits each of ACCase subunit alpha (AccA) and ACCase subunit beta (AccD).

It is found in the cytoplasm. The enzyme catalyses N(6)-carboxybiotinyl-L-lysyl-[protein] + acetyl-CoA = N(6)-biotinyl-L-lysyl-[protein] + malonyl-CoA. It participates in lipid metabolism; malonyl-CoA biosynthesis; malonyl-CoA from acetyl-CoA: step 1/1. In terms of biological role, component of the acetyl coenzyme A carboxylase (ACC) complex. First, biotin carboxylase catalyzes the carboxylation of biotin on its carrier protein (BCCP) and then the CO(2) group is transferred by the carboxyltransferase to acetyl-CoA to form malonyl-CoA. In Nitrosomonas eutropha (strain DSM 101675 / C91 / Nm57), this protein is Acetyl-coenzyme A carboxylase carboxyl transferase subunit alpha.